The primary structure comprises 211 residues: Interleukin-6 (211 aa).

The signal sequence occupies residues 1–29 (MNSLSTSAFSPVAFSLGLLLVMATAFPTP). Cys71 and Cys77 are joined by a disulfide. At Ser80 the chain carries Phosphoserine. A disulfide bridge links Cys100 with Cys110.

The protein belongs to the IL-6 superfamily. As to quaternary structure, component of a hexamer of two molecules each of IL6, IL6R and IL6ST; first binds to IL6R to associate with the signaling subunit IL6ST. Interacts with IL6R (via the N-terminal ectodomain); this interaction may be affected by IL6R-binding with SORL1, hence decreasing IL6 cis signaling. Interacts with SORL1 (via the N-terminal ectodomain); this interaction leads to IL6 internalization and lysosomal degradation. May form a trimeric complex with the soluble SORL1 ectodomain and soluble IL6R receptor; this interaction might stabilize circulating IL6, hence promoting IL6 trans signaling.

It localises to the secreted. Its function is as follows. Cytokine with a wide variety of biological functions in immunity, tissue regeneration, and metabolism. Binds to IL6R, then the complex associates to the signaling subunit IL6ST/gp130 to trigger the intracellular IL6-signaling pathway. The interaction with the membrane-bound IL6R and IL6ST stimulates 'classic signaling', whereas the binding of IL6 and soluble IL6R to IL6ST stimulates 'trans-signaling'. Alternatively, 'cluster signaling' occurs when membrane-bound IL6:IL6R complexes on transmitter cells activate IL6ST receptors on neighboring receiver cells. Functionally, IL6 is a potent inducer of the acute phase response. Rapid production of IL6 contributes to host defense during infection and tissue injury, but excessive IL6 synthesis is involved in disease pathology. In the innate immune response, is synthesized by myeloid cells, such as macrophages and dendritic cells, upon recognition of pathogens through toll-like receptors (TLRs) at the site of infection or tissue injury. In the adaptive immune response, is required for the differentiation of B cells into immunoglobulin-secreting cells. Plays a major role in the differentiation of CD4(+) T cell subsets. Essential factor for the development of T follicular helper (Tfh) cells that are required for the induction of germinal-center formation. Required to drive naive CD4(+) T cells to the Th17 lineage. Also required for proliferation of myeloma cells and the survival of plasmablast cells. Acts as an essential factor in bone homeostasis and on vessels directly or indirectly by induction of VEGF, resulting in increased angiogenesis activity and vascular permeability. Induces, through 'trans-signaling' and synergistically with IL1B and TNF, the production of VEGF. Involved in metabolic controls, is discharged into the bloodstream after muscle contraction increasing lipolysis and improving insulin resistance. 'Trans-signaling' in central nervous system also regulates energy and glucose homeostasis. Mediates, through GLP-1, crosstalk between insulin-sensitive tissues, intestinal L cells and pancreatic islets to adapt to changes in insulin demand. Also acts as a myokine. Plays a protective role during liver injury, being required for maintenance of tissue regeneration. Also has a pivotal role in iron metabolism by regulating HAMP/hepcidin expression upon inflammation or bacterial infection. Through activation of IL6ST-YAP-NOTCH pathway, induces inflammation-induced epithelial regeneration. The chain is Interleukin-6 (IL6) from Camelus bactrianus (Bactrian camel).